Reading from the N-terminus, the 109-residue chain is Thiosulfate sulfurtransferase GlpE (109 aa).

Residues 17–105 (KEGKTALVDI…WARSYPQDIT (89 aa)) form the Rhodanese domain. Catalysis depends on Cys65, which acts as the Cysteine persulfide intermediate.

It belongs to the GlpE family.

It localises to the cytoplasm. It catalyses the reaction thiosulfate + hydrogen cyanide = thiocyanate + sulfite + 2 H(+). The catalysed reaction is thiosulfate + [thioredoxin]-dithiol = [thioredoxin]-disulfide + hydrogen sulfide + sulfite + 2 H(+). Transferase that catalyzes the transfer of sulfur from thiosulfate to thiophilic acceptors such as cyanide or dithiols. May function in a CysM-independent thiosulfate assimilation pathway by catalyzing the conversion of thiosulfate to sulfite, which can then be used for L-cysteine biosynthesis. In Yersinia pestis, this protein is Thiosulfate sulfurtransferase GlpE.